We begin with the raw amino-acid sequence, 231 residues long: Adenylate kinase (231 aa).

Position 12-17 (12-17) interacts with ATP; the sequence is GAGKGT. The tract at residues 32 to 61 is NMP; that stretch reads STGDMLRAAVKAKTPLGLEVKKIMESGGLV. Residues threonine 33, arginine 38, 59-61, 87-90, and glutamine 94 contribute to the AMP site; these read GLV and GFPR. Positions 124–161 are LID; the sequence is GRLIHPASGRTYHRRYNPPKVADKDDVTGEPLIQRADD. ATP is bound by residues arginine 125 and 134–135; that span reads TY. Positions 158 and 169 each coordinate AMP. Residue glycine 205 participates in ATP binding.

This sequence belongs to the adenylate kinase family. Monomer.

It localises to the cytoplasm. It catalyses the reaction AMP + ATP = 2 ADP. The protein operates within purine metabolism; AMP biosynthesis via salvage pathway; AMP from ADP: step 1/1. In terms of biological role, catalyzes the reversible transfer of the terminal phosphate group between ATP and AMP. Plays an important role in cellular energy homeostasis and in adenine nucleotide metabolism. In Coxiella burnetii (strain CbuK_Q154) (Coxiella burnetii (strain Q154)), this protein is Adenylate kinase.